Here is a 1007-residue protein sequence, read N- to C-terminus: Lysosomal alpha-mannosidase (1007 aa).

Residues M1 to A47 form the signal peptide. Intrachain disulfides connect C53/C356 and C266/C271. Zn(2+) is bound by residues H70 and D72. N131 carries N-linked (GlcNAc...) asparagine glycosylation. D194 is a Zn(2+) binding site. D194 acts as the Nucleophile in catalysis. 3 N-linked (GlcNAc...) asparagine glycosylation sites follow: N308, N343, and N365. 2 disulfide bridges follow: C410/C470 and C491/C499. A Zn(2+)-binding site is contributed by H444. N-linked (GlcNAc...) asparagine glycosylation is found at N495, N540, N639, N686, N760, and N927.

Belongs to the glycosyl hydrolase 38 family. Requires Zn(2+) as cofactor.

Its subcellular location is the lysosome. The catalysed reaction is Hydrolysis of terminal, non-reducing alpha-D-mannose residues in alpha-D-mannosides.. In terms of biological role, necessary for the catabolism of N-linked carbohydrates released during glycoprotein turnover. The chain is Lysosomal alpha-mannosidase (MAN2B1) from Cavia porcellus (Guinea pig).